The following is a 174-amino-acid chain: Large ribosomal subunit protein uL10 (174 aa).

This sequence belongs to the universal ribosomal protein uL10 family. As to quaternary structure, part of the ribosomal stalk of the 50S ribosomal subunit. The N-terminus interacts with L11 and the large rRNA to form the base of the stalk. The C-terminus forms an elongated spine to which L12 dimers bind in a sequential fashion forming a multimeric L10(L12)X complex.

Functionally, forms part of the ribosomal stalk, playing a central role in the interaction of the ribosome with GTP-bound translation factors. This is Large ribosomal subunit protein uL10 from Geobacter metallireducens (strain ATCC 53774 / DSM 7210 / GS-15).